The primary structure comprises 863 residues: ATP-dependent helicase Lhr-Core protein 2 (863 aa).

Positions 30, 37, 60, 61, 179, 180, 377, and 380 each coordinate ATP. One can recognise a Helicase ATP-binding domain in the interval valine 41–threonine 234. The short motif at aspartate 179–histidine 182 is the DEAH box element. Positions arginine 275–aspartate 424 constitute a Helicase C-terminal domain. The segment at isoleucine 418–isoleucine 512 is WH domain. A domain 4 region spans residues proline 513–glutamate 863.

This sequence belongs to the Lhr helicase family. Lhr-Core subfamily. As to quaternary structure, monomer.

It carries out the reaction ATP + H2O = ADP + phosphate + H(+). Unwinding of dsRNA duplexes is inhibited by AMP-PMP and ATP-gamma-S. Functionally, a DNA:RNA helicase with a significant strand annealing activity, probably involved in DNA repair and RNA transactions. In vitro has a slow helicase activity with a preference for 3'-overhang duplexes; displaces RNA from 3'-overhang DNA:RNA or RNA:RNA duplexes. 3'-tailed double-stranded (ds)DNA is not unwound. The slow helicase activity on RNA duplexes is ATP-independent. Has strand annealing properties in the absence of ATP; forms 3'-overhang DNA:RNA, 3'-overhang dsRNA and 3'-overhang dsDNA duplexes but not 5'-overhang duplexes. A nucleic acid-dependent ATPase; single-stranded (ss)DNA and RNA are equally stimulatory. Binds ssDNA, RNA, dsDNA and dsRNA duplexes. The protein is ATP-dependent helicase Lhr-Core protein 2 of Thermococcus barophilus (strain DSM 11836 / MP).